The sequence spans 642 residues: Threonine--tRNA ligase (642 aa).

Residues 1–61 form the TGS domain; sequence MPVITLPDGS…EHDAQIAIIT (61 aa). The catalytic stretch occupies residues 243–534; that stretch reads DHRKIGKQLD…LTEEYAGFYP (292 aa). Cys-334, His-385, and His-511 together coordinate Zn(2+).

The protein belongs to the class-II aminoacyl-tRNA synthetase family. Homodimer. It depends on Zn(2+) as a cofactor.

The protein resides in the cytoplasm. It carries out the reaction tRNA(Thr) + L-threonine + ATP = L-threonyl-tRNA(Thr) + AMP + diphosphate + H(+). Catalyzes the attachment of threonine to tRNA(Thr) in a two-step reaction: L-threonine is first activated by ATP to form Thr-AMP and then transferred to the acceptor end of tRNA(Thr). Also edits incorrectly charged L-seryl-tRNA(Thr). This chain is Threonine--tRNA ligase, found in Sodalis glossinidius (strain morsitans).